Consider the following 228-residue polypeptide: UPF0173 metal-dependent hydrolase LMOf2365_1599 (228 aa).

This sequence belongs to the UPF0173 family.

This is UPF0173 metal-dependent hydrolase LMOf2365_1599 from Listeria monocytogenes serotype 4b (strain F2365).